The sequence spans 479 residues: Ribulose bisphosphate carboxylase large chain (479 aa).

The propeptide occupies 1–2 (MS). Residues Asn123 and Thr173 each coordinate substrate. Lys175 (proton acceptor) is an active-site residue. Lys177 contacts substrate. Residues Lys201, Asp203, and Glu204 each contribute to the Mg(2+) site. At Lys201 the chain carries N6-carboxylysine. A Phosphoserine modification is found at Ser208. His294 (proton acceptor) is an active-site residue. 2 residues coordinate substrate: Arg295 and His327. Phosphothreonine is present on Thr330. Ser379 serves as a coordination point for substrate.

The protein belongs to the RuBisCO large chain family. Type I subfamily. Heterohexadecamer of 8 large chains and 8 small chains; disulfide-linked. The disulfide link is formed within the large subunit homodimers. Mg(2+) is required as a cofactor. Post-translationally, the disulfide bond which can form in the large chain dimeric partners within the hexadecamer appears to be associated with oxidative stress and protein turnover.

The protein localises to the plastid. It is found in the chloroplast. It carries out the reaction 2 (2R)-3-phosphoglycerate + 2 H(+) = D-ribulose 1,5-bisphosphate + CO2 + H2O. The enzyme catalyses D-ribulose 1,5-bisphosphate + O2 = 2-phosphoglycolate + (2R)-3-phosphoglycerate + 2 H(+). In terms of biological role, ruBisCO catalyzes two reactions: the carboxylation of D-ribulose 1,5-bisphosphate, the primary event in carbon dioxide fixation, as well as the oxidative fragmentation of the pentose substrate in the photorespiration process. Both reactions occur simultaneously and in competition at the same active site. The chain is Ribulose bisphosphate carboxylase large chain from Draba nemorosa (Woodland whitlowgrass).